We begin with the raw amino-acid sequence, 381 residues long: Cytochrome b (381 aa).

The next 4 membrane-spanning stretches (helical) occupy residues 34-54, 78-99, 114-134, and 179-199; these read FGSL…FLAM, WLIR…YLHI, WNIG…GYVL, and FFAF…IHLL. 2 residues coordinate heme b: H84 and H98. The heme b site is built by H183 and H197. Residue H202 coordinates a ubiquinone. A run of 4 helical transmembrane segments spans residues 227–247, 289–309, 321–341, and 348–368; these read YKDL…ALFM, LGGV…PLLH, MTQI…WIGG, and FIMV…IIMP.

The protein belongs to the cytochrome b family. In terms of assembly, the cytochrome bc1 complex contains 3 respiratory subunits (MT-CYB, CYC1 and UQCRFS1), 2 core proteins (UQCRC1 and UQCRC2) and probably 6 low-molecular weight proteins. It depends on heme b as a cofactor.

It is found in the mitochondrion inner membrane. Component of the ubiquinol-cytochrome c reductase complex (complex III or cytochrome b-c1 complex) that is part of the mitochondrial respiratory chain. The b-c1 complex mediates electron transfer from ubiquinol to cytochrome c. Contributes to the generation of a proton gradient across the mitochondrial membrane that is then used for ATP synthesis. This is Cytochrome b (mt-cyb) from Carcharhinus plumbeus (Sandbar shark).